We begin with the raw amino-acid sequence, 968 residues long: RNA polymerase-associated protein RapA (968 aa).

A Helicase ATP-binding domain is found at 164–334 (EVGQRHAPRV…FARLRLLDPD (171 aa)). ATP is bound at residue 177-184 (DEVGLGKT). The short motif at 280 to 283 (DEAH) is the DEAH box element. The region spanning 490-644 (RVEWLLNYLV…TCPTGRTIYD (155 aa)) is the Helicase C-terminal domain.

Belongs to the SNF2/RAD54 helicase family. RapA subfamily. In terms of assembly, interacts with the RNAP. Has a higher affinity for the core RNAP than for the holoenzyme. Its ATPase activity is stimulated by binding to RNAP.

Its function is as follows. Transcription regulator that activates transcription by stimulating RNA polymerase (RNAP) recycling in case of stress conditions such as supercoiled DNA or high salt concentrations. Probably acts by releasing the RNAP, when it is trapped or immobilized on tightly supercoiled DNA. Does not activate transcription on linear DNA. Probably not involved in DNA repair. The chain is RNA polymerase-associated protein RapA from Yersinia pestis bv. Antiqua (strain Antiqua).